A 1254-amino-acid polypeptide reads, in one-letter code: DNA polymerase gamma (1254 aa).

The span at 1125–1137 (RKKENRIDDENKK) shows a compositional bias: basic and acidic residues. 2 disordered regions span residues 1125–1145 (RKKE…KKNT) and 1202–1240 (YKKK…TNRN). A compositionally biased stretch (polar residues) spans 1208-1217 (QARTASSSPI). Residues 1219-1231 (KTAKAVHSKKLPA) are compositionally biased toward basic residues.

This sequence belongs to the DNA polymerase type-A family. Mg(2+) is required as a cofactor.

It localises to the mitochondrion. The catalysed reaction is DNA(n) + a 2'-deoxyribonucleoside 5'-triphosphate = DNA(n+1) + diphosphate. In terms of biological role, involved in the replication of mitochondrial DNA. The chain is DNA polymerase gamma (MIP1) from Saccharomyces cerevisiae (strain ATCC 204508 / S288c) (Baker's yeast).